A 465-amino-acid polypeptide reads, in one-letter code: Ribulose bisphosphate carboxylase large chain (465 aa).

The residue at position 4 (lysine 4) is an N6,N6,N6-trimethyllysine. Asparagine 113 and threonine 163 together coordinate substrate. The Proton acceptor role is filled by lysine 165. Substrate is bound at residue lysine 167. Lysine 191, aspartate 193, and glutamate 194 together coordinate Mg(2+). Lysine 191 is modified (N6-carboxylysine). Histidine 284 functions as the Proton acceptor in the catalytic mechanism. Substrate-binding residues include arginine 285, histidine 317, and serine 369.

The protein belongs to the RuBisCO large chain family. Type I subfamily. Heterohexadecamer of 8 large chains and 8 small chains; disulfide-linked. The disulfide link is formed within the large subunit homodimers. Mg(2+) is required as a cofactor. Post-translationally, the disulfide bond which can form in the large chain dimeric partners within the hexadecamer appears to be associated with oxidative stress and protein turnover.

It localises to the plastid. Its subcellular location is the chloroplast. It catalyses the reaction 2 (2R)-3-phosphoglycerate + 2 H(+) = D-ribulose 1,5-bisphosphate + CO2 + H2O. The catalysed reaction is D-ribulose 1,5-bisphosphate + O2 = 2-phosphoglycolate + (2R)-3-phosphoglycerate + 2 H(+). Its function is as follows. RuBisCO catalyzes two reactions: the carboxylation of D-ribulose 1,5-bisphosphate, the primary event in carbon dioxide fixation, as well as the oxidative fragmentation of the pentose substrate in the photorespiration process. Both reactions occur simultaneously and in competition at the same active site. In Senega cruciata (Cross-leaved milkwort), this protein is Ribulose bisphosphate carboxylase large chain.